We begin with the raw amino-acid sequence, 126 residues long: MAFSGTWQVYAQENYEEFLRAISLPEDVIKLAKDVKPVTEIQQTGNDFVITSKTPGKSVTNSFTIGKEAEITTMDGRKLKCIVKLEGGKLISETEKFSHKQEIKGGEMIETLTVAGTTMVRKSKKV.

Position 2 is an N-acetylalanine (Ala-2).

This sequence belongs to the calycin superfamily. Fatty-acid binding protein (FABP) family. As to expression, liver.

It localises to the cytoplasm. Functionally, binds free fatty acids and their coenzyme A derivatives, bilirubin, and some other small molecules in the cytoplasm. May be involved in intracellular lipid transport this L-FABP binds only one fatty acid/molecule. Has more affinity for trans-parinaric acid than for cis-parinaric acid. The protein is Fatty acid-binding protein, liver (fabp1) of Rhamdia sapo (South American catfish).